We begin with the raw amino-acid sequence, 136 residues long: Ubiquinol-cytochrome-c reductase complex assembly factor 2 (136 aa).

A mitochondrion-targeting transit peptide spans 1–13; that stretch reads MAALRYRRFLKLC.

Interacts with UQCC1.

It is found in the mitochondrion matrix. Its subcellular location is the mitochondrion nucleoid. The protein resides in the mitochondrion. The protein localises to the mitochondrion intermembrane space. It localises to the mitochondrion inner membrane. Required for the assembly of the ubiquinol-cytochrome c reductase complex (mitochondrial respiratory chain complex III or cytochrome b-c1 complex). Plays a role in the modulation of respiratory chain activities such as oxygen consumption and ATP production and via its modulation of the respiratory chain activity can regulate skeletal muscle differentiation and insulin secretion by pancreatic beta-cells. Involved in cytochrome b translation and/or stability. The protein is Ubiquinol-cytochrome-c reductase complex assembly factor 2 (Uqcc2) of Rattus norvegicus (Rat).